The sequence spans 427 residues: Histidine--tRNA ligase (427 aa).

This sequence belongs to the class-II aminoacyl-tRNA synthetase family. In terms of assembly, homodimer.

Its subcellular location is the cytoplasm. It catalyses the reaction tRNA(His) + L-histidine + ATP = L-histidyl-tRNA(His) + AMP + diphosphate + H(+). The sequence is that of Histidine--tRNA ligase from Streptococcus suis (strain 98HAH33).